We begin with the raw amino-acid sequence, 390 residues long: S-adenosylmethionine synthase (390 aa).

Residue histidine 15 participates in ATP binding. A Mg(2+)-binding site is contributed by aspartate 17. Glutamate 43 contacts K(+). Residues glutamate 56 and glutamine 99 each coordinate L-methionine. The interval 99–109 is flexible loop; sequence QSPDINQGVDR. ATP contacts are provided by residues 164–166, 230–231, aspartate 239, 245–246, alanine 262, and lysine 266; these read DAK, RF, and RK. Residue aspartate 239 participates in L-methionine binding. Position 270 (lysine 270) interacts with L-methionine.

Belongs to the AdoMet synthase family. In terms of assembly, homotetramer; dimer of dimers. Mg(2+) is required as a cofactor. It depends on K(+) as a cofactor.

The protein resides in the cytoplasm. The catalysed reaction is L-methionine + ATP + H2O = S-adenosyl-L-methionine + phosphate + diphosphate. Its pathway is amino-acid biosynthesis; S-adenosyl-L-methionine biosynthesis; S-adenosyl-L-methionine from L-methionine: step 1/1. In terms of biological role, catalyzes the formation of S-adenosylmethionine (AdoMet) from methionine and ATP. The overall synthetic reaction is composed of two sequential steps, AdoMet formation and the subsequent tripolyphosphate hydrolysis which occurs prior to release of AdoMet from the enzyme. The chain is S-adenosylmethionine synthase from Photorhabdus laumondii subsp. laumondii (strain DSM 15139 / CIP 105565 / TT01) (Photorhabdus luminescens subsp. laumondii).